The following is a 553-amino-acid chain: Cytochrome P450 86A2 (553 aa).

A helical membrane pass occupies residues 2-20 (DVSNTMLLVAVVAAYWLWF). C459 contributes to the heme binding site.

This sequence belongs to the cytochrome P450 family. It depends on heme as a cofactor. As to expression, expressed in leaves, stems, flowers and siliques. Expressed at low levels in roots. Expressed in guard cells of cotyledons and leaves.

The protein resides in the membrane. The catalysed reaction is an organic molecule + reduced [NADPH--hemoprotein reductase] + O2 = an alcohol + oxidized [NADPH--hemoprotein reductase] + H2O + H(+). Functionally, catalyzes the omega-hydroxylation of various fatty acids (FA). Acts on saturated and unsaturated fatty acids with chain lengths from C12 to C18. Plays a major role in the biosynthesis of extracellular lipids. Involved in the biosynthesis of hydroxylated fatty acids required for cutin biosynthesis, cuticle development and repression of bacterial type III gene expression. The polypeptide is Cytochrome P450 86A2 (CYP86A2) (Arabidopsis thaliana (Mouse-ear cress)).